The chain runs to 778 residues: Semaphorin-3ab (778 aa).

The N-terminal stretch at 1 to 17 is a signal peptide; it reads MDYLWWIVLLIWTLIAP. The 484-residue stretch at 32 to 515 folds into the Sema domain; it reads RLKPSYKEML…SAIGVSQMPL (484 aa). Asn54 carries an N-linked (GlcNAc...) asparagine glycan. Residues Cys105 and Cys116 are joined by a disulfide bond. An N-linked (GlcNAc...) asparagine glycan is attached at Asn127. 4 disulfides stabilise this stretch: Cys134–Cys143, Cys270–Cys382, Cys294–Cys342, and Cys518–Cys536. The region spanning 579–668 is the Ig-like C2-type domain; sequence GEAGLLDKTV…FIQTLLRLTL (90 aa). N-linked (GlcNAc...) asparagine glycosylation is present at Asn593. Cys652 and Cys716 are joined by a disulfide. Positions 727–778 are disordered; it reads RRQKANLLHASQSHTSQILHSSQSHAKWKLLQENKKGRNRRTHEMQRAPRSV. The span at 735-751 shows a compositional bias: polar residues; that stretch reads HASQSHTSQILHSSQSH. Positions 756–778 are enriched in basic and acidic residues; the sequence is LLQENKKGRNRRTHEMQRAPRSV.

It belongs to the semaphorin family. Expressed in rhombomeres three and five, and in the posterior half of newly formed somites which is avoided by ventrally extending motor axons.

The protein localises to the secreted. Might normally influence the midsegmental pathway choice of the ventrally extending motor axons by contributing to a repulsive domain in the posterior somite. This Danio rerio (Zebrafish) protein is Semaphorin-3ab (sema3ab).